Here is a 334-residue protein sequence, read N- to C-terminus: Methionine adenosyltransferase 2 subunit beta (334 aa).

Residues 37–40, 60–62, 71–72, C93, R97, Y159, and L185 contribute to the NADP(+) site; these read TGLL, YSR, and NL. The interval 319-334 is required for interaction with MAT2A; it reads LWPFLVDKRWRQTVFH.

Belongs to the dTDP-4-dehydrorhamnose reductase family. MAT2B subfamily. As to quaternary structure, heterotrimer; composed of a catalytic mat2a homodimer that binds one regulatory mat2b chain. Heterohexamer; composed of a central, catalytic mat2a homotetramer flanked on either side by a regulatory mat2b chain. NADP binding increases the affinity for mat2a.

It participates in amino-acid biosynthesis; S-adenosyl-L-methionine biosynthesis; S-adenosyl-L-methionine from L-methionine: step 1/1. Its function is as follows. Regulatory subunit of S-adenosylmethionine synthetase 2, an enzyme that catalyzes the formation of S-adenosylmethionine from methionine and ATP. Regulates MAT2A catalytic activity by changing its kinetic properties, increasing its affinity for L-methionine. Can bind NADP (in vitro). This chain is Methionine adenosyltransferase 2 subunit beta (mat2b), found in Xenopus tropicalis (Western clawed frog).